We begin with the raw amino-acid sequence, 89 residues long: Small ribosomal subunit protein uS15 (89 aa).

Residues 1-16 (MSVADIKKQDIVKDNG) show a composition bias toward basic and acidic residues. Residues 1–24 (MSVADIKKQDIVKDNGRSANDTGS) are disordered.

This sequence belongs to the universal ribosomal protein uS15 family. As to quaternary structure, part of the 30S ribosomal subunit. Forms a bridge to the 50S subunit in the 70S ribosome, contacting the 23S rRNA.

Functionally, one of the primary rRNA binding proteins, it binds directly to 16S rRNA where it helps nucleate assembly of the platform of the 30S subunit by binding and bridging several RNA helices of the 16S rRNA. In terms of biological role, forms an intersubunit bridge (bridge B4) with the 23S rRNA of the 50S subunit in the ribosome. In Ralstonia pickettii (strain 12J), this protein is Small ribosomal subunit protein uS15.